Consider the following 397-residue polypeptide: Elongation factor Tu (397 aa).

The region spanning 10–206 is the tr-type G domain; the sequence is KPHVNIGTIG…ACDDYIPEPV (197 aa). Residues 19–26 are G1; it reads GHIDHGKT. A GTP-binding site is contributed by 19 to 26; sequence GHIDHGKT. Mg(2+) is bound at residue Thr26. The interval 62-66 is G2; it reads GITIS. The tract at residues 83-86 is G3; sequence DCPG. GTP is bound by residues 83-87 and 138-141; these read DCPGH and NKAD. The tract at residues 138–141 is G4; the sequence is NKAD. A G5 region spans residues 176-178; that stretch reads SAL.

Belongs to the TRAFAC class translation factor GTPase superfamily. Classic translation factor GTPase family. EF-Tu/EF-1A subfamily. As to quaternary structure, monomer.

It localises to the cytoplasm. The catalysed reaction is GTP + H2O = GDP + phosphate + H(+). In terms of biological role, GTP hydrolase that promotes the GTP-dependent binding of aminoacyl-tRNA to the A-site of ribosomes during protein biosynthesis. This chain is Elongation factor Tu, found in Acidothermus cellulolyticus (strain ATCC 43068 / DSM 8971 / 11B).